The sequence spans 362 residues: Ribosomal RNA large subunit methyltransferase M (362 aa).

Residues Ser194, 227-230 (CPGG), Asp246, Asp266, and Asp284 each bind S-adenosyl-L-methionine. The active-site Proton acceptor is the Lys313.

This sequence belongs to the class I-like SAM-binding methyltransferase superfamily. RNA methyltransferase RlmE family. RlmM subfamily. Monomer.

The protein resides in the cytoplasm. It carries out the reaction cytidine(2498) in 23S rRNA + S-adenosyl-L-methionine = 2'-O-methylcytidine(2498) in 23S rRNA + S-adenosyl-L-homocysteine + H(+). In terms of biological role, catalyzes the 2'-O-methylation at nucleotide C2498 in 23S rRNA. The chain is Ribosomal RNA large subunit methyltransferase M from Aggregatibacter aphrophilus (strain NJ8700) (Haemophilus aphrophilus).